The following is a 465-amino-acid chain: Casein kinase 1-like protein 2 (465 aa).

A Protein kinase domain is found at 9-277; sequence FRLGRKIGGG…LKRLFRDLFI (269 aa). Residues 15-23 and K38 each bind ATP; that span reads IGGGSFGEI. D128 serves as the catalytic Proton acceptor. Disordered stretches follow at residues 300–344 and 396–428; these read STPP…GIPR and REAA…VSRN. Residues 405–428 show a composition bias toward polar residues; that stretch reads SEPSNPQIVEAGSGSNSKIPVSRN.

This sequence belongs to the protein kinase superfamily. CK1 Ser/Thr protein kinase family. Casein kinase I subfamily. Monomer. Autophosphorylated.

Its subcellular location is the cytoplasm. The protein resides in the nucleus. The enzyme catalyses L-seryl-[protein] + ATP = O-phospho-L-seryl-[protein] + ADP + H(+). The catalysed reaction is L-threonyl-[protein] + ATP = O-phospho-L-threonyl-[protein] + ADP + H(+). Its function is as follows. Casein kinases are operationally defined by their preferential utilization of acidic proteins such as caseins as substrates. It can phosphorylate a large number of proteins. In Arabidopsis thaliana (Mouse-ear cress), this protein is Casein kinase 1-like protein 2.